The primary structure comprises 1287 residues: DNA-directed RNA polymerase 147 kDa polypeptide (1287 aa).

Belongs to the poxviridae DNA-directed RNA polymerase 147 kDa subunit family. In terms of assembly, the DNA-dependent RNA polymerase used for intermediate and late genes expression consists of eight subunits Rpo30/OPG66, Rpo7/OPG90, Rpo22/OPG103, Rpo147/OPG105, Rpo18/OPG119, Rpo19/OPG131, Rpo132/OPG151 and Rpo35/OPG156. The same holoenzyme, with the addition of the transcription-specificity factor OPG109, is used for early gene expression.

The protein localises to the virion. It catalyses the reaction RNA(n) + a ribonucleoside 5'-triphosphate = RNA(n+1) + diphosphate. Functionally, part of the DNA-dependent RNA polymerase which catalyzes the transcription of viral DNA into RNA using the four ribonucleoside triphosphates as substrates. Responsible for the transcription of early, intermediate and late genes. DNA-dependent RNA polymerase associates with the early transcription factor (ETF), itself composed of OPG118 and OPG133, thereby allowing the early genes transcription. Late transcription, and probably also intermediate transcription, require newly synthesized RNA polymerase. In Fowlpox virus (strain NVSL) (FPV), this protein is DNA-directed RNA polymerase 147 kDa polypeptide (OPG105).